Here is a 339-residue protein sequence, read N- to C-terminus: Putative NADP-dependent oxidoreductase YfmJ (339 aa).

NADP(+) is bound by residues 156–159 (GAVG), K182, Y198, N222, 244–250 (CGAISSY), 277–279 (FIV), and N327.

The protein belongs to the NADP-dependent oxidoreductase L4BD family.

In terms of biological role, putative quinone oxidoreductase that may contribute to the degradation of aromatic compounds. The sequence is that of Putative NADP-dependent oxidoreductase YfmJ (yfmJ) from Bacillus subtilis (strain 168).